A 950-amino-acid chain; its full sequence is Kinase suppressor of Ras 2 (950 aa).

Positions proline 239–arginine 296 are disordered. Residues arginine 259–proline 273 are compositionally biased toward low complexity. Residues threonine 272 and threonine 276 each carry the phosphothreonine modification. The segment at lysine 412–cysteine 456 adopts a Phorbol-ester/DAG-type zinc-finger fold. Zn(2+) contacts are provided by histidine 413, cysteine 425, cysteine 428, cysteine 438, cysteine 441, histidine 446, cysteine 449, and cysteine 456. Serine 474 carries the phosphoserine; by MARK3 modification. A Phosphothreonine modification is found at threonine 497. A disordered region spans residues leucine 498 to glutamine 556. Residues serine 517 to serine 530 are compositionally biased toward low complexity. The segment covering serine 531–proline 548 has biased composition (pro residues). In terms of domain architecture, Protein kinase spans leucine 666–leucine 931. Isoleucine 672 to valine 680 serves as a coordination point for ATP. Aspartate 786 serves as the catalytic Proton donor/acceptor. Residues lysine 788 and aspartate 803 each contribute to the ATP site.

The protein belongs to the protein kinase superfamily. TKL Ser/Thr protein kinase family. As to quaternary structure, heterodimerizes (via N-terminus) with BRAF (via N-terminus) in a MAP2K1/MEK1-dependent manner. Interacts with BRAF; this increases the low intrinsic protein kinase activity of KSR2. Interacts with MAP2K1, forming a heterodimer that can dimerize to form a heterotetramer. Interacts with MAP3K8, MAPK, RAS and RAF. In terms of processing, phosphorylated on Ser-474 by MARK3. In terms of tissue distribution, mainly expressed in brain and kidney.

It localises to the cytoplasm. The protein resides in the membrane. The enzyme catalyses L-seryl-[protein] + ATP = O-phospho-L-seryl-[protein] + ADP + H(+). It carries out the reaction L-threonyl-[protein] + ATP = O-phospho-L-threonyl-[protein] + ADP + H(+). With respect to regulation, kinase activity is inhibited by ASC24. Functionally, location-regulated scaffold connecting MEK to RAF. Has very low protein kinase activity and can phosphorylate MAP2K1 at several Ser and Thr residues with very low efficiency (in vitro). Acts as MAP2K1/MEK1-dependent allosteric activator of BRAF; upon binding to MAP2K1/MEK1, dimerizes with BRAF and promotes BRAF-mediated phosphorylation of MAP2K1/MEK1. Interaction with BRAF enhances KSR2-mediated phosphorylation of MAP2K1 (in vitro). Blocks MAP3K8 kinase activity and MAP3K8-mediated signaling. Acts as a negative regulator of MAP3K3-mediated activation of ERK, JNK and NF-kappa-B pathways, inhibiting MAP3K3-mediated interleukin-8 production. The chain is Kinase suppressor of Ras 2 from Homo sapiens (Human).